The sequence spans 307 residues: S-methyl-5'-thioadenosine phosphorylase (307 aa).

Residues Thr-20, 62-63 (RH), and 95-96 (SA) contribute to the phosphate site. Residue Met-197 participates in substrate binding. Residue Ser-198 participates in phosphate binding. 221 to 223 (DYD) contacts substrate.

It belongs to the PNP/MTAP phosphorylase family. MTAP subfamily. Homotrimer.

Its subcellular location is the cytoplasm. The protein resides in the nucleus. It carries out the reaction S-methyl-5'-thioadenosine + phosphate = 5-(methylsulfanyl)-alpha-D-ribose 1-phosphate + adenine. Its pathway is amino-acid biosynthesis; L-methionine biosynthesis via salvage pathway; S-methyl-5-thio-alpha-D-ribose 1-phosphate from S-methyl-5'-thioadenosine (phosphorylase route): step 1/1. Catalyzes the reversible phosphorylation of S-methyl-5'-thioadenosine (MTA) to adenine and 5-methylthioribose-1-phosphate. Involved in the breakdown of MTA, a major by-product of polyamine biosynthesis. Responsible for the first step in the methionine salvage pathway after MTA has been generated from S-adenosylmethionine. Has broad substrate specificity with 6-aminopurine nucleosides as preferred substrates. The protein is S-methyl-5'-thioadenosine phosphorylase of Fusarium vanettenii (strain ATCC MYA-4622 / CBS 123669 / FGSC 9596 / NRRL 45880 / 77-13-4) (Fusarium solani subsp. pisi).